Consider the following 330-residue polypeptide: G-protein coupled receptor 3 (330 aa).

Over 1–42 (MMWGAGSSMAWFSAGSGSVNVSSVDPVEEPTGPATLLPSPRA) the chain is Extracellular. Residue Asn20 is glycosylated (N-linked (GlcNAc...) asparagine). A helical membrane pass occupies residues 43 to 62 (WDVVLCISGTLVSCENALVV). Residues 63–74 (AIIVGTPAFRAP) are Cytoplasmic-facing. The chain crosses the membrane as a helical span at residues 75–98 (MFLLVGSLAVADLLAGLGLVLHFA). Over 99-110 (ADFCIGSPEMSL) the chain is Extracellular. The helical transmembrane segment at 111 to 132 (MLVGVLAMAFTASIGSLLAITV) threads the bilayer. Residues 133-153 (DRYLSLYNALTYYSETTVTRT) lie on the Cytoplasmic side of the membrane. The chain crosses the membrane as a helical span at residues 154 to 173 (YVMLALVWVGALGLGLVPVL). The Extracellular segment spans residues 174–198 (AWNCRDGLTTCGVVYPLSKNHLVVL). The chain crosses the membrane as a helical span at residues 199-217 (AIAFFMVFGIMLQLYAQIC). Over 218-245 (RIVCRHAQQIALQRHLLPASHYVATRKG) the chain is Cytoplasmic. A helical membrane pass occupies residues 246–272 (IATLAVVLGAFAACWLPFTVYCLLGDA). At 273 to 277 (DSPRL) the chain is on the extracellular side. A helical membrane pass occupies residues 278–299 (YTYLTLLPATYNSMINPVIYAF). The Cytoplasmic portion of the chain corresponds to 300-330 (RNQDVQKVLWAICCCCSTSKIPFRSRSPSDV). A lipid anchor (S-palmitoyl cysteine) is attached at Cys313. Phosphoserine is present on residues Ser324, Ser326, and Ser328.

It belongs to the G-protein coupled receptor 1 family. Expressed in both the forebrain and hindbrain, with the highest level in habenula. Lower level expression in the testis. Expressed in several metabolically active peripheral tissues, although at lower levels than in the central nervous system (CNS).

The protein resides in the cell membrane. Its function is as follows. Constitutively active G-protein coupled receptor that maintains high 3'-5'-cyclic adenosine monophosphate (cAMP) levels that a plays a role in serveral processes including meiotic arrest in oocytes or neuronal development via activation of numerous intracellular signaling pathways. Acts as an essential activator of thermogenic adipocytes and drives thermogenesis via its intrinsic G(s)-coupling activity without the requirement of a ligand. Has a potential role in modulating a number of brain functions, including behavioral responses to stress, amyloid-beta peptide generation in neurons. Stimulates neurite outgrowth in cerebellar granular neurons modulated via PKA, ERK, and most strongly PI3K-mediated signaling pathways. In Mus musculus (Mouse), this protein is G-protein coupled receptor 3 (Gpr3).